Reading from the N-terminus, the 449-residue chain is Lysine-sensitive aspartokinase 3 (449 aa).

The segment at 2 to 245 is aspartokinase; that stretch reads SEIVVSKFGG…AAKRIDEIAF (244 aa). 8–11 contributes to the ATP binding site; that stretch reads KFGG. Substrate-binding positions include threonine 45, glutamate 119, and 198–201; that span reads RGGS. ATP contacts are provided by residues 221–222, tyrosine 227, arginine 232, and 257–258; these read TD and KV. The tract at residues 246–449 is interface; sequence AEAAEMATFG…VQKLHSNLFE (204 aa). Residues 299-449 are required for homodimerization; the sequence is FRALALRRNQ…VQKLHSNLFE (151 aa). The 82-residue stretch at 313 to 394 folds into the ACT domain; it reads LHSLNMLHSR…GLALVALIGN (82 aa). L-lysine is bound by residues methionine 318, serine 321, 324-325, 338-340, and 345-346; these read FL, SVD, and SE.

The protein belongs to the aspartokinase family. In terms of assembly, homodimer. In the inactive form a homotetramer is formed.

It carries out the reaction L-aspartate + ATP = 4-phospho-L-aspartate + ADP. Its pathway is amino-acid biosynthesis; L-lysine biosynthesis via DAP pathway; (S)-tetrahydrodipicolinate from L-aspartate: step 1/4. With respect to regulation, synthesis and activity are sensitive to the allosteric inhibitor lysine, one of the end metabolites of the aspartic acid family branched pathway. The sequence is that of Lysine-sensitive aspartokinase 3 (lysC) from Escherichia coli (strain K12).